A 348-amino-acid polypeptide reads, in one-letter code: S-adenosylmethionine:tRNA ribosyltransferase-isomerase (348 aa).

It belongs to the QueA family. In terms of assembly, monomer.

Its subcellular location is the cytoplasm. The catalysed reaction is 7-aminomethyl-7-carbaguanosine(34) in tRNA + S-adenosyl-L-methionine = epoxyqueuosine(34) in tRNA + adenine + L-methionine + 2 H(+). It participates in tRNA modification; tRNA-queuosine biosynthesis. Transfers and isomerizes the ribose moiety from AdoMet to the 7-aminomethyl group of 7-deazaguanine (preQ1-tRNA) to give epoxyqueuosine (oQ-tRNA). The sequence is that of S-adenosylmethionine:tRNA ribosyltransferase-isomerase from Alteromonas mediterranea (strain DSM 17117 / CIP 110805 / LMG 28347 / Deep ecotype).